We begin with the raw amino-acid sequence, 353 residues long: MWVMSQVRSMEPDLTLAAVYQAAANLTEQDKEIFAEAVKTAFSVCSSAAPSARLRMIETPTQNFMFVTSVIPSGVTSGEKKTKLNIDAALDNLALSFANKKSKKMARTYLLQNVLRTQDQQVAISGKYILYTKKHIETSLMIDKTKLVKKILEYAETPNLLGYTDVRDLECLLWLVFCGPKSFCQSDSCFGYSKTGYNAAFPNLLPPYLYECGQNNGLFFGIVQAYVFSWYSDFDFSALEISERARRRIRSLLYDLKQKFAEQEVSVLSVASQMCIFCALYKQNKLSLEYVSGDLKTSVFSPIIIKDCLCAQTTISTTQMLPGTKSSAIFPVYDLRKLLGALVISEGSVKFDI.

It belongs to the herpesviridae UL95 family.

The protein is Protein U67 (U67) of Human herpesvirus 6A (strain Uganda-1102) (HHV-6 variant A).